Here is a 310-residue protein sequence, read N- to C-terminus: Olfactory receptor 5P55 (310 aa).

Residues 1–25 (METQNHTTVTEFILLGLTESSTLRV) are Extracellular-facing. N-linked (GlcNAc...) asparagine glycosylation is present at asparagine 5. The helical transmembrane segment at 26 to 46 (ILFMVFLGIYTVTLVGNFSII) threads the bilayer. The Cytoplasmic segment spans residues 47-54 (SLIRSCPQ). A helical membrane pass occupies residues 55 to 75 (LHTPMYLFLSHLAFVDIGFST). The Extracellular segment spans residues 76-99 (SITPTMFKGFLGNRLVLSVAACIA). Residues cysteine 97 and cysteine 189 are joined by a disulfide bond. A helical transmembrane segment spans residues 100-120 (QFCITVTFGTVECFLLAVMAY). The Cytoplasmic portion of the chain corresponds to 121 to 133 (DRYVAICSPLLYS). The helical transmembrane segment at 134–154 (THMSPRICFLLVGASYVGGCV) threads the bilayer. Residues 155 to 196 (NSGAFTSCLSILSFCGPNQIDHFFCDFPAVLKLSCSDVSIIG) lie on the Extracellular side of the membrane. The helical transmembrane segment at 197–217 (IIPSISAGSIIVITVFVIAVS) threads the bilayer. At 218–237 (YAYILITILKMRSTEGRQKA) the chain is on the cytoplasmic side. A helical transmembrane segment spans residues 238–258 (FSTCTSHLTAVTLYYGTITFI). At 259-271 (YVMPKSNYSTAQN) the chain is on the extracellular side. The N-linked (GlcNAc...) asparagine glycan is linked to asparagine 265. The chain crosses the membrane as a helical span at residues 272–292 (KILSVFYTVVIPMLNPLIYSL). At 293 to 310 (RNRDVKEALRKAIIRIFP) the chain is on the cytoplasmic side.

Belongs to the G-protein coupled receptor 1 family.

Its subcellular location is the cell membrane. In terms of biological role, potential odorant receptor. The polypeptide is Olfactory receptor 5P55 (Mus musculus (Mouse)).